A 578-amino-acid polypeptide reads, in one-letter code: Isocitrate dehydrogenase kinase/phosphatase (578 aa).

ATP is bound by residues 315–321 and K336; that span reads APGIRGM. Residue D371 is part of the active site.

This sequence belongs to the AceK family.

The protein resides in the cytoplasm. It carries out the reaction L-seryl-[isocitrate dehydrogenase] + ATP = O-phospho-L-seryl-[isocitrate dehydrogenase] + ADP + H(+). Bifunctional enzyme which can phosphorylate or dephosphorylate isocitrate dehydrogenase (IDH) on a specific serine residue. This is a regulatory mechanism which enables bacteria to bypass the Krebs cycle via the glyoxylate shunt in response to the source of carbon. When bacteria are grown on glucose, IDH is fully active and unphosphorylated, but when grown on acetate or ethanol, the activity of IDH declines drastically concomitant with its phosphorylation. The protein is Isocitrate dehydrogenase kinase/phosphatase of Escherichia coli O139:H28 (strain E24377A / ETEC).